A 784-amino-acid polypeptide reads, in one-letter code: MQRLMMLLATSGACLGLLAVAAVAAAGANPAQRDTHSLLPTHRRQKRDWIWNQMHIDEEKNTSLPHHVGKIKSSVSRKNAKYLLKGEYVGKVFRVDAETGDVFAIERLDRENISEYHLTAVIVDKDTGENLETPSSFTIKVHDVNDNWPVFTHRLFNASVPESSAVGTSVISVTAVDADDPTVGDHASVMYQILKGKEYFAIDNSGRIITITKSLDREKQARYEIVVEARDAQGLRGDSGTATVLVTLQDINDNFPFFTQTKYTFVVPEDTRVGTSVGSLFVEDPDEPQNRMTKYSILRGDYQDAFTIETNPAHNEGIIKPMKPLDYEYIQQYSFIVEATDPTIDLRYMSPPAGNRAQVIINITDVDEPPIFQQPFYHFQLKENQKKPLIGTVLAMDPDAARHSIGYSIRRTSDKGQFFRVTKKGDIYNEKELDREVYPWYNLTVEAKELDSTGTPTGKESIVQVHIEVLDENDNAPEFAKPYQPKVCENAVHGQLVLQISAIDKDITPRNVKFKFILNTENNFTLTDNHDNTANITVKYGQFDREHTKVHFLPVVISDNGMPSRTGTSTLTVAVCKCNEQGEFTFCEDMAAQVGVSIQAVVAILLCILTITVITLLIFLRRRLRKQARAHGKSVPEIHEQLVTYDEEGGGEMDTTSYDVSVLNSVRRGGAKPPRPALDARPSLYAQVQKPPRHAPGAHGGPGEMAAMIEVKKDEADHDGDGPPYDTLHIYGYEGSESIAESLSSLGTDSSDSDVDYDFLNDWGPRFKMLAELYGSDPREELLY.

The first 25 residues, 1–25, serve as a signal peptide directing secretion; it reads MQRLMMLLATSGACLGLLAVAAVAA. A propeptide spanning residues 26 to 47 is cleaved from the precursor; it reads AGANPAQRDTHSLLPTHRRQKR. 5 consecutive Cadherin domains span residues 48–151, 152–258, 259–372, 373–477, and 478–593; these read DWIW…WPVF, THRL…FPFF, TQTK…PPIF, QQPF…DNAP, and EFAK…MAAQ. The Extracellular segment spans residues 48 to 599; the sequence is DWIWNQMHID…MAAQVGVSIQ (552 aa). Residues Glu58 and Glu59 each contribute to the Ca(2+) site. The N-linked (GlcNAc...) (complex) asparagine glycan is linked to Asn61. Residues Asp109 and Glu111 each contribute to the Ca(2+) site. N-linked (GlcNAc...) (complex) asparagine glycosylation occurs at Asn112. The Ca(2+) site is built by Asp143, Val144, Asn145, Asp146, and Asn147. Asn157 carries an N-linked (GlcNAc...) asparagine glycan. Residues Asp177, Asp179, His186, and Asp231 each contribute to the Ca(2+) site. N-linked (GlcNAc...) asparagine glycosylation occurs at Asn362. The N-linked (GlcNAc...) (complex) asparagine glycan is linked to Asn442. 2 N-linked (GlcNAc...) asparagine glycosylation sites follow: Asn523 and Asn535. A helical transmembrane segment spans residues 600-620; sequence AVVAILLCILTITVITLLIFL. The required for interaction with PALS1 stretch occupies residues 621 to 660; the sequence is RRRLRKQARAHGKSVPEIHEQLVTYDEEGGGEMDTTSYDV. The Cytoplasmic portion of the chain corresponds to 621-784; it reads RRRLRKQARA…GSDPREELLY (164 aa).

In terms of assembly, part of a complex composed of AMOTL2, MAGI1 and CDH5, within the complex AMOTL2 acts as a scaffold protein for the interaction of MAGI1 with CDH5. The complex is required for coupling actin fibers to cell junctions in endothelial cells. Within the complex AMOTL2 (via its N-terminus) interacts with CDH5. Interacts (via cadherin 5 domain) with PTPRB. Interacts with TRPC4. Interacts with KRIT1. Interacts with PARD3. Interacts with RTN4 (isoform B). Interacts with PALS1; the interaction promotes PALS1 localization to cell junctions and is required for CDH5-mediated vascular lumen formation and endothelial cell. Interacts with CTNND1/p120-catenin; the interaction controls CADH5 endocytosis. Phosphorylated on tyrosine residues by KDR/VEGFR-2. Dephosphorylated by PTPRB. In terms of processing, O-glycosylated. In terms of tissue distribution, expressed in endothelial cells (at protein level). Expressed in the brain.

The protein localises to the cell junction. The protein resides in the adherens junction. It is found in the cell membrane. It localises to the cytoplasm. Functionally, cadherins are calcium-dependent cell adhesion proteins. They preferentially interact with themselves in a homophilic manner in connecting cells; cadherins may thus contribute to the sorting of heterogeneous cell types. This cadherin may play a important role in endothelial cell biology through control of the cohesion and organization of the intercellular junctions. It associates with alpha-catenin forming a link to the cytoskeleton. Plays a role in coupling actin fibers to cell junctions in endothelial cells, via acting as a cell junctional complex anchor for AMOTL2 and MAGI1. Acts in concert with KRIT1 and PALS1 to establish and maintain correct endothelial cell polarity and vascular lumen. These effects are mediated by recruitment and activation of the Par polarity complex and RAP1B. Required for activation of PRKCZ and for the localization of phosphorylated PRKCZ, PARD3, TIAM1 and RAP1B to the cell junction. Associates with CTNND1/p120-catenin to control CADH5 endocytosis. In Homo sapiens (Human), this protein is Cadherin-5.